Consider the following 332-residue polypeptide: Nucleotide-binding protein RC1_2868 (332 aa).

The tract at residues 1–27 is disordered; that stretch reads MTGQPLTMETAAGADAGTGAATHPADG. Residues 10 to 22 show a composition bias toward low complexity; it reads TAAGADAGTGAAT. 36 to 43 lines the ATP pocket; it reads GMSGGGLS. Residue 82-85 participates in GTP binding; that stretch reads DSRT. Basic and acidic residues-rich tracts occupy residues 302 to 312 and 322 to 332; these read GHRDLDRRHPA and VASRETPEEHR. The interval 302 to 332 is disordered; that stretch reads GHRDLDRRHPAPEPAPPWREVASRETPEEHR.

The protein belongs to the RapZ-like family.

Functionally, displays ATPase and GTPase activities. The protein is Nucleotide-binding protein RC1_2868 of Rhodospirillum centenum (strain ATCC 51521 / SW).